Consider the following 209-residue polypeptide: Uridine kinase (209 aa).

Position 12 to 19 (12 to 19 (GGSGSGKT)) interacts with ATP.

This sequence belongs to the uridine kinase family.

The protein resides in the cytoplasm. The catalysed reaction is uridine + ATP = UMP + ADP + H(+). The enzyme catalyses cytidine + ATP = CMP + ADP + H(+). The protein operates within pyrimidine metabolism; CTP biosynthesis via salvage pathway; CTP from cytidine: step 1/3. It functions in the pathway pyrimidine metabolism; UMP biosynthesis via salvage pathway; UMP from uridine: step 1/1. The protein is Uridine kinase of Streptococcus mutans serotype c (strain ATCC 700610 / UA159).